A 352-amino-acid chain; its full sequence is tRNA-specific 2-thiouridylase MnmA (352 aa).

Residues 6-13 (AMSGGVDS) and leucine 32 contribute to the ATP site. Catalysis depends on cysteine 101, which acts as the Nucleophile. The cysteines at positions 101 and 194 are disulfide-linked. Position 125 (glycine 125) interacts with ATP. Residues 144–146 (KDQ) are interaction with tRNA. Cysteine 194 (cysteine persulfide intermediate) is an active-site residue.

It belongs to the MnmA/TRMU family.

It localises to the cytoplasm. The enzyme catalyses S-sulfanyl-L-cysteinyl-[protein] + uridine(34) in tRNA + AH2 + ATP = 2-thiouridine(34) in tRNA + L-cysteinyl-[protein] + A + AMP + diphosphate + H(+). Its function is as follows. Catalyzes the 2-thiolation of uridine at the wobble position (U34) of tRNA, leading to the formation of s(2)U34. The sequence is that of tRNA-specific 2-thiouridylase MnmA from Frankia alni (strain DSM 45986 / CECT 9034 / ACN14a).